The primary structure comprises 219 residues: NAD(P)H-quinone oxidoreductase subunit K 2 (219 aa).

Cys53, Cys54, Cys118, and Cys149 together coordinate [4Fe-4S] cluster.

This sequence belongs to the complex I 20 kDa subunit family. In terms of assembly, NDH-1 can be composed of about 15 different subunits; different subcomplexes with different compositions have been identified which probably have different functions. The cofactor is [4Fe-4S] cluster.

Its subcellular location is the cellular thylakoid membrane. It carries out the reaction a plastoquinone + NADH + (n+1) H(+)(in) = a plastoquinol + NAD(+) + n H(+)(out). It catalyses the reaction a plastoquinone + NADPH + (n+1) H(+)(in) = a plastoquinol + NADP(+) + n H(+)(out). Its function is as follows. NDH-1 shuttles electrons from an unknown electron donor, via FMN and iron-sulfur (Fe-S) centers, to quinones in the respiratory and/or the photosynthetic chain. The immediate electron acceptor for the enzyme in this species is believed to be plastoquinone. Couples the redox reaction to proton translocation, and thus conserves the redox energy in a proton gradient. Cyanobacterial NDH-1 also plays a role in inorganic carbon-concentration. In Synechocystis sp. (strain ATCC 27184 / PCC 6803 / Kazusa), this protein is NAD(P)H-quinone oxidoreductase subunit K 2.